The sequence spans 253 residues: DNA repair protein RecO (253 aa).

It belongs to the RecO family.

Involved in DNA repair and RecF pathway recombination. The chain is DNA repair protein RecO from Dehalococcoides mccartyi (strain ATCC BAA-2100 / JCM 16839 / KCTC 5957 / BAV1).